Here is a 128-residue protein sequence, read N- to C-terminus: Large ribosomal subunit protein bL12 (128 aa).

It belongs to the bacterial ribosomal protein bL12 family. In terms of assembly, homodimer. Part of the ribosomal stalk of the 50S ribosomal subunit. Forms a multimeric L10(L12)X complex, where L10 forms an elongated spine to which 2 to 4 L12 dimers bind in a sequential fashion. Binds GTP-bound translation factors.

Functionally, forms part of the ribosomal stalk which helps the ribosome interact with GTP-bound translation factors. Is thus essential for accurate translation. This Picosynechococcus sp. (strain ATCC 27264 / PCC 7002 / PR-6) (Agmenellum quadruplicatum) protein is Large ribosomal subunit protein bL12.